The sequence spans 289 residues: ATP synthase gamma chain (289 aa).

Belongs to the ATPase gamma chain family. As to quaternary structure, F-type ATPases have 2 components, CF(1) - the catalytic core - and CF(0) - the membrane proton channel. CF(1) has five subunits: alpha(3), beta(3), gamma(1), delta(1), epsilon(1). CF(0) has three main subunits: a, b and c.

The protein localises to the cell inner membrane. Produces ATP from ADP in the presence of a proton gradient across the membrane. The gamma chain is believed to be important in regulating ATPase activity and the flow of protons through the CF(0) complex. In Cereibacter sphaeroides (strain ATCC 17023 / DSM 158 / JCM 6121 / CCUG 31486 / LMG 2827 / NBRC 12203 / NCIMB 8253 / ATH 2.4.1.) (Rhodobacter sphaeroides), this protein is ATP synthase gamma chain.